The chain runs to 837 residues: V-type proton ATPase 116 kDa subunit a 1 (837 aa).

Residues 1-388 (MGELFRSEEM…DAYGIGTYRE (388 aa)) are Cytoplasmic-facing. Phosphothreonine is present on residues Thr-250 and Thr-360. Position 364 is a phosphotyrosine (Tyr-364). A helical membrane pass occupies residues 389–407 (INPAPYTIITFPFLFAVMF). The Vacuolar portion of the chain corresponds to 408–409 (GD). Residues 410-426 (FGHGILMTLFAVWMVLR) form a helical membrane-spanning segment. Residues 427 to 441 (ESRILSQKNENEMFS) are Cytoplasmic-facing. The helical transmembrane segment at 442–471 (TVFSGRYIILLMGVFSMYTGLIYNDCFSKS) threads the bilayer. Over 472-534 (LNIFGSSWSV…ATNKLTFLNS (63 aa)) the chain is Vacuolar. Residue Asn-488 is glycosylated (N-linked (GalNAc...) asparagine). Residues 535–554 (FKMKMSVILGIIHMLFGVSL) traverse the membrane as a helical segment. Residues 555–572 (SLFNHIYFKKPLNIYFGF) are Cytoplasmic-facing. The chain crosses the membrane as a helical span at residues 573–593 (IPEIIFMTSLFGYLVILIFYK). Topologically, residues 594-638 (WTAYDAHTSENAPSLLIHFINMFLFSYPESGYSMLYSGQKGIQCF) are vacuolar. Residues 639-658 (LVVVALLCVPWMLLFKPLVL) form a helical membrane-spanning segment. At 659–724 (RRQYLRRKHL…DTMVHQAIHT (66 aa)) the chain is on the cytoplasmic side. A helical membrane pass occupies residues 725–749 (IEYCLGCISNTASYLRLWALSLAHA). At 750-770 (QLSEVLWTMVIHIGLSVKSLA) the chain is on the vacuolar side. The chain crosses the membrane as a helical span at residues 771–809 (GGLVLFFFFTAFATLTVAILLIMEGLSAFLHALRLHWVE). Residues 810–837 (FQNKFYSGTGFKFLPFSFEHIREGKFEE) are Cytoplasmic-facing.

The protein belongs to the V-ATPase 116 kDa subunit family. V-ATPase is a heteromultimeric enzyme made up of two complexes: the ATP-hydrolytic V1 complex and the proton translocation V0 complex. The V1 complex consists of three catalytic AB heterodimers that form a heterohexamer, three peripheral stalks each consisting of EG heterodimers, one central rotor including subunits D and F, and the regulatory subunits C and H. The proton translocation complex V0 consists of the proton transport subunit a, a ring of proteolipid subunits c9c'', rotary subunit d, subunits e and f, and the accessory subunits ATP6AP1/Ac45 and ATP6AP2/PRR. Interacts with SPAAR.

The protein localises to the cytoplasmic vesicle. The protein resides in the clathrin-coated vesicle membrane. It localises to the secretory vesicle. Its subcellular location is the synaptic vesicle membrane. It is found in the melanosome. Functionally, subunit of the V0 complex of vacuolar(H+)-ATPase (V-ATPase), a multisubunit enzyme composed of a peripheral complex (V1) that hydrolyzes ATP and a membrane integral complex (V0) that transports protons across cellular membranes. V-ATPase is responsible for the acidification of various organelles, such as lysosomes, endosomes, the trans-Golgi network, and secretory granules, including synaptic vesicles. In certain cell types, can be exported to the plasma membrane, where it is involved in the acidification of the extracellular environment. Required for assembly and activity of the vacuolar ATPase. Through its action on compartment acidification, plays an essential role in neuronal development in terms of integrity and connectivity of neurons. This Homo sapiens (Human) protein is V-type proton ATPase 116 kDa subunit a 1 (ATP6V0A1).